The sequence spans 357 residues: Thiamine thiazole synthase 3, chloroplastic (357 aa).

The N-terminal 51 residues, 1-51 (MSISAAGVATGLGANVELKSNVGSSSSSVAGVRLFTSRKAQLRRCAAPATS), are a transit peptide targeting the chloroplast. Substrate is bound by residues A103, 123-124 (EQ), G131, and A196. Residue C225 is modified to 2,3-didehydroalanine (Cys). Substrate contacts are provided by residues D227, H242, M294, and 304 to 306 (RMG).

The protein belongs to the THI4 family. As to quaternary structure, homooctamer. The cofactor is Fe cation. During the catalytic reaction, a sulfide is transferred from Cys-225 to a reaction intermediate, generating a dehydroalanine residue.

Its subcellular location is the plastid. It is found in the chloroplast. The enzyme catalyses [ADP-thiazole synthase]-L-cysteine + glycine + NAD(+) = [ADP-thiazole synthase]-dehydroalanine + ADP-5-ethyl-4-methylthiazole-2-carboxylate + nicotinamide + 3 H2O + 2 H(+). Functionally, involved in biosynthesis of the thiamine precursor thiazole. Catalyzes the conversion of NAD and glycine to adenosine diphosphate 5-(2-hydroxyethyl)-4-methylthiazole-2-carboxylic acid (ADT), an adenylated thiazole intermediate. The reaction includes an iron-dependent sulfide transfer from a conserved cysteine residue of the protein to a thiazole intermediate. The enzyme can only undergo a single turnover, which suggests it is a suicide enzyme. May have additional roles in adaptation to various stress conditions and in DNA damage tolerance. This is Thiamine thiazole synthase 3, chloroplastic from Physcomitrium patens (Spreading-leaved earth moss).